A 150-amino-acid chain; its full sequence is UPF0756 membrane protein HD_1071 (150 aa).

A run of 4 helical transmembrane segments spans residues 1-21 (MSLQ…LGVL), 52-72 (YGLT…IVSG), 82-102 (ILSW…WLGG), and 114-134 (IITG…GIPV).

This sequence belongs to the UPF0756 family.

The protein resides in the cell membrane. The chain is UPF0756 membrane protein HD_1071 from Haemophilus ducreyi (strain 35000HP / ATCC 700724).